A 174-amino-acid polypeptide reads, in one-letter code: Type II secretion system protein M (174 aa).

Topologically, residues 1 to 32 are cytoplasmic; the sequence is MKVMTQFHERLRAQAETSQLAIRWRGLPARDR. Residues 33-52 form a helical membrane-spanning segment; it reads LALLWLGAFLLLVVLYLALW. At 53-174 the chain is on the periplasmic side; that stretch reads RPAERHLQSA…VSARLSLRVE (122 aa).

Belongs to the GSP M family. As to quaternary structure, type II secretion system is composed of four main components: the outer membrane complex, the inner membrane complex, the cytoplasmic secretion ATPase and the periplasm-spanning pseudopilus. Forms homodimers. Interacts with XcpY/GspL. Interacts with XcpR/GspE and XcpS/GspF.

The protein resides in the cell inner membrane. Inner membrane component of the type II secretion system required for the energy-dependent secretion of extracellular factors such as proteases and toxins from the periplasm. Plays a role in the complex assembly and recruits XcpY resulting in a stable complex in the inner membrane. Provides thus a link between the energy-providing XcpR protein in the cytoplasm and the rest of the T2SS machinery. In Pseudomonas aeruginosa (strain ATCC 15692 / DSM 22644 / CIP 104116 / JCM 14847 / LMG 12228 / 1C / PRS 101 / PAO1), this protein is Type II secretion system protein M (xcpZ).